Consider the following 145-residue polypeptide: Lysozyme-like protein 4 (145 aa).

The N-terminal stretch at M1–T19 is a signal peptide. A C-type lysozyme domain is found at A20 to L145. 4 cysteine pairs are disulfide-bonded: C25-C143, C49-C130, C84-C95, and C91-C109. E54 is an active-site residue.

It belongs to the glycosyl hydrolase 22 family. As to quaternary structure, monomer.

Its subcellular location is the secreted. It localises to the cytoplasmic vesicle. The protein resides in the secretory vesicle. The protein localises to the acrosome. It is found in the cell projection. Its subcellular location is the cilium. It localises to the flagellum. Its function is as follows. May be involved in fertilization. Has no detectable bacteriolytic and lysozyme activities in vitro. The sequence is that of Lysozyme-like protein 4 (LYZL4) from Bos taurus (Bovine).